Consider the following 183-residue polypeptide: Inosine triphosphate pyrophosphatase (183 aa).

8 to 13 (TGNKNK) contributes to the ITP binding site. A Mg(2+)-binding site is contributed by glutamate 36. ITP is bound by residues lysine 48, 64 to 65 (DT), lysine 81, 140 to 143 (FGWD), lysine 161, and 166 to 167 (HR).

The protein belongs to the HAM1 NTPase family. Homodimer. Mg(2+) is required as a cofactor. The cofactor is Mn(2+).

It localises to the cytoplasm. Its subcellular location is the nucleus. The catalysed reaction is ITP + H2O = IMP + diphosphate + H(+). It catalyses the reaction dITP + H2O = dIMP + diphosphate + H(+). It carries out the reaction XTP + H2O = XMP + diphosphate + H(+). Its function is as follows. Pyrophosphatase that hydrolyzes non-canonical purine nucleotides such as inosine triphosphate (ITP), deoxyinosine triphosphate (dITP) or xanthosine 5'-triphosphate (XTP) to their respective monophosphate derivatives. The enzyme does not distinguish between the deoxy- and ribose forms. Probably excludes non-canonical purines from RNA and DNA precursor pools, thus preventing their incorporation into RNA and DNA and avoiding chromosomal lesions. In Ajellomyces capsulatus (strain G186AR / H82 / ATCC MYA-2454 / RMSCC 2432) (Darling's disease fungus), this protein is Inosine triphosphate pyrophosphatase.